Consider the following 364-residue polypeptide: tRNA/tmRNA (uracil-C(5))-methyltransferase (364 aa).

Residues Gln-188, Tyr-216, Asn-221, Glu-237, and Asp-297 each contribute to the S-adenosyl-L-methionine site. Cys-322 functions as the Nucleophile in the catalytic mechanism. Glu-356 acts as the Proton acceptor in catalysis.

The protein belongs to the class I-like SAM-binding methyltransferase superfamily. RNA M5U methyltransferase family. TrmA subfamily.

The enzyme catalyses uridine(54) in tRNA + S-adenosyl-L-methionine = 5-methyluridine(54) in tRNA + S-adenosyl-L-homocysteine + H(+). The catalysed reaction is uridine(341) in tmRNA + S-adenosyl-L-methionine = 5-methyluridine(341) in tmRNA + S-adenosyl-L-homocysteine + H(+). Its function is as follows. Dual-specificity methyltransferase that catalyzes the formation of 5-methyluridine at position 54 (m5U54) in all tRNAs, and that of position 341 (m5U341) in tmRNA (transfer-mRNA). In Teredinibacter turnerae (strain ATCC 39867 / T7901), this protein is tRNA/tmRNA (uracil-C(5))-methyltransferase.